We begin with the raw amino-acid sequence, 156 residues long: Protein-export protein SecB (156 aa).

It belongs to the SecB family. In terms of assembly, homotetramer, a dimer of dimers. One homotetramer interacts with 1 SecA dimer.

Its subcellular location is the cytoplasm. In terms of biological role, one of the proteins required for the normal export of preproteins out of the cell cytoplasm. It is a molecular chaperone that binds to a subset of precursor proteins, maintaining them in a translocation-competent state. It also specifically binds to its receptor SecA. The protein is Protein-export protein SecB of Desulfotalea psychrophila (strain LSv54 / DSM 12343).